Reading from the N-terminus, the 423-residue chain is Glutamate--cysteine ligase EgtA (423 aa).

Belongs to the glutamate--cysteine ligase type 2 family. EgtA subfamily.

It catalyses the reaction L-cysteine + L-glutamate + ATP = gamma-L-glutamyl-L-cysteine + ADP + phosphate + H(+). It participates in amino-acid biosynthesis; ergothioneine biosynthesis. Functionally, catalyzes the synthesis of gamma-glutamylcysteine (gamma-GC). This compound is used as substrate for the biosynthesis of the low-molecular thiol compound ergothioneine. The protein is Glutamate--cysteine ligase EgtA of Mycolicibacterium smegmatis (strain ATCC 700084 / mc(2)155) (Mycobacterium smegmatis).